The primary structure comprises 1363 residues: MAVEEKNSPTGAAMTNTGILVPSSQQSLPEWWTKTQKFFSRENTITPTFGYFRLLFGTQPGKTDIALIVIGTIAGIGAGIPFPLLGILFGELVDDLNSSTCSTTQAPPGGYQAAITTKVLQVIYVSILNFVCMYIHTGCWSMVGERLVRRLRTKYFHSLLRQEIAFTDTLPSGDVTSRLVSDIEVIQAGTSEKVGLFIGTISYFVAAYIVAFLKVATIAAMLMSVVPIYFLMAFGGGHYIKKYSGRISTHINAATSIVSSSLSHMSIVHAFNANARLEALFAQHLVSARMDALKKAITHSIQFGMLYFVAYASNALAFWQGSRMIADLAEGKPSKVSVGAVYTVIFVLLDASFVLSQMAPFMHIFASAASAGDRLMTTIKRQSAIDGTSSEGDSTISLASEEIELQDVTFNYPARPEVPVLQGVSFKIPPNKHTAIVGTSGSGKSTVVALLERLYDPITGCVRVGNRDLKEINVRHLRGSIGLVQQEPNLLDRSILENIAHGLVSSSQEKHKHLLPTLLGPSLSELTEKIRQGASEDEAVTEQGDVVREIVNLTRHAATLSNAIDFINALPDGLATRVGSSGAELSGGQKQRIALARALIRDPPVLLLDEATAALDSTSERLIQAALNKVSENVTTVSIAHRLATAKDADNIIVMQKGRVMEQGTHMDLVARDGVYAGMVRLQNIGKFSSSSSIMTESTQVDANIDRSLTTDTLLNKEEKLSLEQGVLDEKEKPAQLYMPEEADSLPTEPENEKEKPKQTLWATMKGSFPLIRPNILLISLGLITSIMIGVSYTGEAVIFGHTVGSLSVCRGGPSIRSSGMLFGLLFFILAIVKFAAVIVNGAAFGWAAEKTLYRTRVLSLRSLLRQPLEWHNADGRTPGLLVALVTSDASALSSLTGTTIGVLFSTVANLFAGVILSQCHRMEDSRSPSGYLTRIKHQKAYAKATAITVESVDNIKSIAAFSLEQEAYSVFNRSLKAPYKSNMKSVLHGNFWLSLAYSISTLVYALAYWWGSQQILAGMYTQVQFFIVLPALLFSTQSCGQMFALVPDISKARIAASNIVDLLSIKHEGDEEYDKTGSKASAKHTDPRFNMLEDKPRDVEAQLITTTPSSFPTKGMGVQFRNVHFRYPSRPNQPALDDLSINISPGQFCALVGPSGSGKSTTFALLEKFYNPASGSIIIDGVDITKQSGAAFRDTIALVPQENVMFEGTVAFNIGLGARPDVEATQEEIEEACRLANIHDTIAALPDGYNTVCSQDGKQFSGGQRQRLSIARALVRKPRLLLLDESTSALDVESEKHVQDALAKVARKTTIVAIAHRLNTIHRADRIFMIERGRCVDQGTHAELVERCESYRANVIHQSLDA.

The helical transmembrane segment at isoleucine 65–leucine 85 threads the bilayer. The ABC transmembrane type-1 1 domain maps to valine 69 to serine 367. An N-linked (GlcNAc...) asparagine glycan is attached at asparagine 97. Helical transmembrane passes span valine 119–cysteine 139, lysine 193–leucine 213, valine 215–glycine 235, isoleucine 301–glycine 321, and valine 336–serine 356. The 280-residue stretch at isoleucine 403–leucine 682 folds into the ABC transporter 1 domain. Glycine 438–serine 445 contributes to the ATP binding site. N-linked (GlcNAc...) asparagine glycosylation is found at asparagine 552 and asparagine 633. A disordered region spans residues tyrosine 738 to lysine 758. A run of 3 helical transmembrane segments spans residues leucine 781 to glycine 801, glycine 820 to valine 840, and leucine 896 to isoleucine 916. An ABC transmembrane type-1 2 domain is found at leucine 781 to lysine 1052. N-linked (GlcNAc...) asparagine glycosylation is present at asparagine 973. 2 helical membrane-spanning segments follow: residues phenylalanine 992 to glycine 1012 and isoleucine 1016 to serine 1036. One can recognise an ABC transporter 2 domain in the interval valine 1119–histidine 1358. Residue glycine 1154–serine 1161 coordinates ATP.

This sequence belongs to the ABC transporter superfamily. ABCB family. Multidrug resistance exporter (TC 3.A.1.201) subfamily.

Its subcellular location is the cell membrane. Functionally, pleiotropic ABC efflux transporter that may be involved in the modulation susceptibility to a wide range of unrelated cytotoxic compounds. In Trichophyton tonsurans (strain CBS 112818) (Scalp ringworm fungus), this protein is ABC multidrug transporter MDR2.